Here is a 170-residue protein sequence, read N- to C-terminus: MGVDQPLGENIITTSLDSLVNWARKSSIWPMTFGLACCAIEMMATGAAKHDLDRFGIIFRASPRQADCIIIAGTVTKKMLPVIKTVYEQMPEPKWVVAMGACACSGGVFDTYSVVQGIDEALPVDVYIPGCPPRPEALLYGLLKLQDKIANERNSFGSSIGLGERLEPAA.

[4Fe-4S] cluster contacts are provided by Cys-37, Cys-38, Cys-102, and Cys-131.

It belongs to the complex I 20 kDa subunit family. In terms of assembly, NDH-1 is composed of 14 different subunits. Subunits NuoB, C, D, E, F, and G constitute the peripheral sector of the complex. Requires [4Fe-4S] cluster as cofactor.

The protein localises to the cell inner membrane. The catalysed reaction is a quinone + NADH + 5 H(+)(in) = a quinol + NAD(+) + 4 H(+)(out). In terms of biological role, NDH-1 shuttles electrons from NADH, via FMN and iron-sulfur (Fe-S) centers, to quinones in the respiratory chain. The immediate electron acceptor for the enzyme in this species is believed to be ubiquinone. Couples the redox reaction to proton translocation (for every two electrons transferred, four hydrogen ions are translocated across the cytoplasmic membrane), and thus conserves the redox energy in a proton gradient. This is NADH-quinone oxidoreductase subunit B from Citrifermentans bemidjiense (strain ATCC BAA-1014 / DSM 16622 / JCM 12645 / Bem) (Geobacter bemidjiensis).